The following is a 164-amino-acid chain: Peptide deformylase (164 aa).

Fe cation is bound by residues Cys-87 and His-129. The active site involves Glu-130. Fe cation is bound at residue His-133.

The protein belongs to the polypeptide deformylase family. The cofactor is Fe(2+).

It catalyses the reaction N-terminal N-formyl-L-methionyl-[peptide] + H2O = N-terminal L-methionyl-[peptide] + formate. Functionally, removes the formyl group from the N-terminal Met of newly synthesized proteins. Requires at least a dipeptide for an efficient rate of reaction. N-terminal L-methionine is a prerequisite for activity but the enzyme has broad specificity at other positions. The protein is Peptide deformylase of Thermotoga maritima (strain ATCC 43589 / DSM 3109 / JCM 10099 / NBRC 100826 / MSB8).